Consider the following 536-residue polypeptide: Casein kinase I homolog RAG8 (536 aa).

Residues 26 to 42 (HSTQVLHGSGQHGMQPS) are compositionally biased toward polar residues. The segment at 26–68 (HSTQVLHGSGQHGMQPSGNNVLNGLANGATGLQSSASSTSTRD) is disordered. Over residues 43-65 (GNNVLNGLANGATGLQSSASSTS) the composition is skewed to low complexity. The 285-residue stretch at 77–361 (YKIGKKIGEG…QKLDGEYDWM (285 aa)) folds into the Protein kinase domain. Residues 83 to 91 (IGEGSFGVL) and K106 each bind ATP. D196 (proton acceptor) is an active-site residue. 2 stretches are compositionally biased toward polar residues: residues 407–420 (NNLNGSNVPLQSHS) and 427–436 (DLTQGVSNAP). Residues 407–524 (NNLNGSNVPL…NGKVQVADSN (118 aa)) form a disordered region. Low complexity-rich tracts occupy residues 437-453 (QQPQQIMSQQQYQQHTQ) and 463-514 (AYKQ…NQPQ). 2 S-palmitoyl cysteine lipidation sites follow: C535 and C536.

The protein belongs to the protein kinase superfamily. CK1 Ser/Thr protein kinase family. Casein kinase I subfamily.

The enzyme catalyses L-seryl-[protein] + ATP = O-phospho-L-seryl-[protein] + ADP + H(+). It catalyses the reaction L-threonyl-[protein] + ATP = O-phospho-L-threonyl-[protein] + ADP + H(+). Its function is as follows. Casein kinases are operationally defined by their preferential utilization of acidic proteins such as caseins as substrates. The protein is Casein kinase I homolog RAG8 (RAG8) of Kluyveromyces lactis (strain ATCC 8585 / CBS 2359 / DSM 70799 / NBRC 1267 / NRRL Y-1140 / WM37) (Yeast).